The following is a 98-amino-acid chain: NADH-ubiquinone oxidoreductase chain 4L (98 aa).

A run of 3 helical transmembrane segments spans residues 1 to 21 (MSLI…GLLM), 26 to 46 (LMSA…FTTL), and 61 to 81 (IILL…LVMI).

The protein belongs to the complex I subunit 4L family. Core subunit of respiratory chain NADH dehydrogenase (Complex I) which is composed of 45 different subunits.

Its subcellular location is the mitochondrion inner membrane. It carries out the reaction a ubiquinone + NADH + 5 H(+)(in) = a ubiquinol + NAD(+) + 4 H(+)(out). In terms of biological role, core subunit of the mitochondrial membrane respiratory chain NADH dehydrogenase (Complex I) which catalyzes electron transfer from NADH through the respiratory chain, using ubiquinone as an electron acceptor. Part of the enzyme membrane arm which is embedded in the lipid bilayer and involved in proton translocation. The chain is NADH-ubiquinone oxidoreductase chain 4L (MT-ND4L) from Physeter macrocephalus (Sperm whale).